Here is a 297-residue protein sequence, read N- to C-terminus: UDP-N-acetylenolpyruvoylglucosamine reductase (297 aa).

Residues 24–189 (KVGGNAEIFF…LKAIFKVNKG (166 aa)) enclose the FAD-binding PCMH-type domain. The active site involves Arg169. Catalysis depends on Ser218, which acts as the Proton donor. Glu289 is an active-site residue.

Belongs to the MurB family. The cofactor is FAD.

It is found in the cytoplasm. The enzyme catalyses UDP-N-acetyl-alpha-D-muramate + NADP(+) = UDP-N-acetyl-3-O-(1-carboxyvinyl)-alpha-D-glucosamine + NADPH + H(+). The protein operates within cell wall biogenesis; peptidoglycan biosynthesis. Cell wall formation. In Rickettsia canadensis (strain McKiel), this protein is UDP-N-acetylenolpyruvoylglucosamine reductase.